The chain runs to 87 residues: DNA-directed RNA polymerase subunit omega (87 aa).

This sequence belongs to the RNA polymerase subunit omega family. The RNAP catalytic core consists of 2 alpha, 1 beta, 1 beta' and 1 omega subunit. When a sigma factor is associated with the core the holoenzyme is formed, which can initiate transcription.

It carries out the reaction RNA(n) + a ribonucleoside 5'-triphosphate = RNA(n+1) + diphosphate. Its function is as follows. Promotes RNA polymerase assembly. Latches the N- and C-terminal regions of the beta' subunit thereby facilitating its interaction with the beta and alpha subunits. In Alcanivorax borkumensis (strain ATCC 700651 / DSM 11573 / NCIMB 13689 / SK2), this protein is DNA-directed RNA polymerase subunit omega.